The primary structure comprises 533 residues: MKQIWQALKAHQQAVEHRAILDLFADPRRAETFSTRLGDMLFDWSKTNIDHTARDLLIDLAGAAGVAEKREAMFSGAKINETEGRAVLHTALRNMDRPVRVDGVDVTPALRETHARMQAFVRDLRSGRFKGQGGPITDVVNIGIGGSDLGPAMACLALAPYADGPRCQFVSNVDGAHIHDTLKDLDPATTLVIVASKTFTTIETMTNAETAKRWMATRVSDPAAQFAAVSTAADRTAAFGIDASRVFGFEDWVGGRYSMWGPIGLALMIAIGPEEFDAFLAGGAEMDRHFREAPFAENLPVLLALVGLWHNQICGHATRAVLPYDQRLARLPAYLQQLEMESNGKRVAMDGHELTHHSGPIVWGEPGTNGQHAFYQLIHQGSRIVPCEFLVAREGHEPDLAHQHLLLVSNCLAQSEALLRGRSVEEARAILARKGLTGSELERQARHRVFPGNRPSTVLAYEKLTPATLGRIVALYEHRVFVEGVILGINSYDQWGVELGKELALALQPMLEGRAGTEGKDGSTAQLVSYLRC.

The Proton donor role is filled by Glu-341. Catalysis depends on residues His-372 and Lys-501.

The protein belongs to the GPI family.

Its subcellular location is the cytoplasm. It catalyses the reaction alpha-D-glucose 6-phosphate = beta-D-fructose 6-phosphate. Its pathway is carbohydrate biosynthesis; gluconeogenesis. The protein operates within carbohydrate degradation; glycolysis; D-glyceraldehyde 3-phosphate and glycerone phosphate from D-glucose: step 2/4. Catalyzes the reversible isomerization of glucose-6-phosphate to fructose-6-phosphate. This chain is Glucose-6-phosphate isomerase, found in Cereibacter sphaeroides (strain KD131 / KCTC 12085) (Rhodobacter sphaeroides).